The primary structure comprises 151 residues: Large ribosomal subunit protein uL15 (151 aa).

A compositionally biased stretch (basic residues) spans 1–14; sequence MRREKKSRAYRGSR. The tract at residues 1–33 is disordered; it reads MRREKKSRAYRGSRTHGWGRVGQHRKSGSRGGR.

Belongs to the universal ribosomal protein uL15 family. Part of the 50S ribosomal subunit.

Its function is as follows. Binds to the 23S rRNA. In Thermofilum pendens (strain DSM 2475 / Hrk 5), this protein is Large ribosomal subunit protein uL15.